A 905-amino-acid polypeptide reads, in one-letter code: Patched domain-containing protein 3 (905 aa).

The disordered stretch occupies residues 1–67; the sequence is MISSKVAPGE…PVGQEAPPPR (67 aa). Residues 94–114 form a helical membrane-spanning segment; it reads WLFLLGPVLLTASLGTGLIFL. N-linked (GlcNAc...) asparagine glycosylation is found at N146, N199, N229, and N233. 6 helical membrane-spanning segments follow: residues 337-357, 369-389, 391-411, 441-461, 475-495, and 558-578; these read TVIP…VVSC, VAVF…GLML, IGVP…GVGV, VAVS…TGIT, GTTL…IMAL, and FIVV…CFQV. The region spanning 338 to 495 is the SSD domain; the sequence is VIPLFHLAYI…ITCFGAIMAL (158 aa). N647, N661, and N692 each carry an N-linked (GlcNAc...) asparagine glycan. A run of 5 helical transmembrane segments spans residues 759–779, 781–801, 813–833, 849–869, and 882–902; these read VMIA…HPVC, LWVT…MAFW, LVIC…AFVS, LLGY…CVLA, and IMFL…PVFL.

This sequence belongs to the patched family. In terms of tissue distribution, expressed in germ cells of the testis (at protein level).

The protein localises to the cell projection. It localises to the cilium. It is found in the flagellum membrane. The protein resides in the endoplasmic reticulum membrane. In terms of biological role, may play a role in sperm development or sperm function. However, does not appear to have an essential role in spermatogenesis or male fertility. In Rattus norvegicus (Rat), this protein is Patched domain-containing protein 3.